The following is a 145-amino-acid chain: Transcription antitermination protein NusB (145 aa).

It belongs to the NusB family.

Involved in transcription antitermination. Required for transcription of ribosomal RNA (rRNA) genes. Binds specifically to the boxA antiterminator sequence of the ribosomal RNA (rrn) operons. The sequence is that of Transcription antitermination protein NusB from Acidothermus cellulolyticus (strain ATCC 43068 / DSM 8971 / 11B).